A 77-amino-acid polypeptide reads, in one-letter code: Conotoxin Vc6c (77 aa).

The first 22 residues, 1 to 22 (MKLTCMVIVAVLFLTANTFVTA), serve as a signal peptide directing secretion. Positions 23-51 (DDSGNGLENLFSKAHHEIKNPEASNLNKR) are excised as a propeptide. 3 disulfides stabilise this stretch: Cys52-Cys67, Cys59-Cys71, and Cys66-Cys76.

As to expression, expressed by the venom duct.

It is found in the secreted. The polypeptide is Conotoxin Vc6c (Conus victoriae (Queen Victoria cone)).